A 515-amino-acid chain; its full sequence is 1-pyrroline-5-carboxylate dehydrogenase (515 aa).

Active-site residues include E286 and C320.

It belongs to the aldehyde dehydrogenase family. RocA subfamily.

It catalyses the reaction L-glutamate 5-semialdehyde + NAD(+) + H2O = L-glutamate + NADH + 2 H(+). The protein operates within amino-acid degradation; L-proline degradation into L-glutamate; L-glutamate from L-proline: step 2/2. The protein is 1-pyrroline-5-carboxylate dehydrogenase (rocA) of Bacillus subtilis (strain 168).